The following is an 816-amino-acid chain: Protein hunchback (816 aa).

Disordered regions lie at residues 33 to 92 (LSHH…QPMD), 129 to 151 (QQHF…GGFN), 165 to 185 (YYGG…PTAV), and 197 to 229 (ALTP…LMSN). Composition is skewed to low complexity over residues 49–60 (SNSNSGASSPRQ), 79–89 (QQQQQQQQQQQ), and 129–139 (QQHFQAAQHQQ). Residue T199 is modified to Phosphothreonine. Residues S209, S228, S230, and S231 each carry the phosphoserine modification. Over residues 219 to 229 (EPEKEHDLMSN) the composition is skewed to basic and acidic residues. C2H2-type zinc fingers lie at residues 261-283 (YKCK…TRTH), 290-312 (LQCA…IRKH), 318-340 (FQCD…RKSH), and 346-364 (YRCA…FKLH). Disordered stretches follow at residues 387–427 (VIDV…QQQQ), 536–612 (LQQQ…QLPH), and 679–734 (GSSA…SNPT). Low complexity-rich tracts occupy residues 399 to 427 (SKSF…QQQQ) and 536 to 560 (LQQQ…QQQQ). The span at 567-578 (NEEDEEEEEHED) shows a compositional bias: acidic residues. Phosphoserine is present on residues S584 and S587. Low complexity predominate over residues 712–734 (SASSTASSSGNSSNASSSTSNPT). C2H2-type zinc fingers lie at residues 763 to 785 (YECK…MGYH) and 791 to 815 (FKCN…RNAH).

This sequence belongs to the hunchback C2H2-type zinc-finger protein family.

Its subcellular location is the nucleus. In terms of biological role, gap class segmentation protein that controls development of head structures. The chain is Protein hunchback from Drosophila virilis (Fruit fly).